Consider the following 213-residue polypeptide: Pyridoxine/pyridoxamine 5'-phosphate oxidase (213 aa).

FMN contacts are provided by residues Arg-60 to Lys-65, Tyr-75 to Ser-76, Lys-82, and Gln-104. A substrate-binding site is contributed by Lys-65. 2 residues coordinate substrate: Tyr-122 and Arg-126. Residues Gln-139–Ser-140 and Trp-184 contribute to the FMN site. Residue Arg-190–His-192 coordinates substrate. Arg-194 contacts FMN.

It belongs to the pyridoxamine 5'-phosphate oxidase family. As to quaternary structure, homodimer. FMN is required as a cofactor.

The catalysed reaction is pyridoxamine 5'-phosphate + O2 + H2O = pyridoxal 5'-phosphate + H2O2 + NH4(+). The enzyme catalyses pyridoxine 5'-phosphate + O2 = pyridoxal 5'-phosphate + H2O2. The protein operates within cofactor metabolism; pyridoxal 5'-phosphate salvage; pyridoxal 5'-phosphate from pyridoxamine 5'-phosphate: step 1/1. It participates in cofactor metabolism; pyridoxal 5'-phosphate salvage; pyridoxal 5'-phosphate from pyridoxine 5'-phosphate: step 1/1. In terms of biological role, catalyzes the oxidation of either pyridoxine 5'-phosphate (PNP) or pyridoxamine 5'-phosphate (PMP) into pyridoxal 5'-phosphate (PLP). This Nitrobacter hamburgensis (strain DSM 10229 / NCIMB 13809 / X14) protein is Pyridoxine/pyridoxamine 5'-phosphate oxidase.